A 234-amino-acid polypeptide reads, in one-letter code: Zinc finger BED domain-containing protein 3 (234 aa).

The segment at 19–42 is disordered; the sequence is AAARGGQCPGLGPAPTPTPPGRLG. The segment at 43 to 104 adopts a BED-type zinc-finger fold; the sequence is APYSEAWGYF…SAHRRELESS (62 aa). 4 residues coordinate Zn(2+): C69, C72, H92, and H97. Disordered stretches follow at residues 94–126 and 202–225; these read RSAH…AAPE and REGA…GDRD. Over residues 111 to 122 the composition is skewed to pro residues; sequence PAAPCPPPPGPA. Residues 216–225 are compositionally biased toward basic and acidic residues; the sequence is LKDDPEGDRD.

In terms of assembly, associates with the subcortical maternal complex (SCMC) composed of at least NLRP5, KHDC3L, OOEP, and TLE6 via interaction with NLRP5 and TLE6. Interacts with AXIN1; the interaction is direct, enhanced by protein kinase GSK3B and casein kinase CSNK1E activities and decreases GSK3B-induced beta-catenin serine and threonine phosphorylations. Secreted in blood plasma, and expressed in skeletal muscle and adipose tissue (at protein level).

It is found in the cytoplasm. The protein localises to the membrane. The protein resides in the secreted. Acts as a positive regulator in the activation of the canonical Wnt/beta-catenin signaling pathway by stabilizing cytoplasmic beta-catenin. Involved in transcription activation of Wnt target gene expression. Plays a role in symmetric division of blastomeres in the early stages of embryogenesis via regulation of mitotic spindle central positioning and organization of the F-actin filament network. Plays a role in regulating the distribution of cellular organelles, via modulation of cytoskeletal dynamics and cytoplasmic lattice formation. This chain is Zinc finger BED domain-containing protein 3 (ZBED3), found in Homo sapiens (Human).